Here is a 100-residue protein sequence, read N- to C-terminus: Transcription and mRNA export factor SUS1 (100 aa).

It belongs to the ENY2 family. As to quaternary structure, component of the nuclear pore complex (NPC)-associated TREX-2 complex (transcription and export complex 2), composed of at least SUS1, SAC3, THP1, SEM1, and CDC31. TREX-2 contains 2 SUS1 chains. The TREX-2 complex interacts with the nucleoporin NUP1. Component of the 1.8 MDa SAGA transcription coactivator-HAT complex. SAGA is built of 5 distinct domains with specialized functions. Within the SAGA complex, SUS1, SGF11, SGF73 and UBP8 form an additional subcomplex of SAGA called the DUB module (deubiquitination module). Interacts directly with THP1, SAC3, SGF11, and with the RNA polymerase II.

The protein localises to the nucleus. Its subcellular location is the nucleoplasm. The protein resides in the cytoplasm. It localises to the P-body. Involved in mRNA export coupled transcription activation by association with both the TREX-2 and the SAGA complexes. At the promoters, SAGA is required for recruitment of the basal transcription machinery. It influences RNA polymerase II transcriptional activity through different activities such as TBP interaction and promoter selectivity, interaction with transcription activators, and chromatin modification through histone acetylation and deubiquitination. Within the SAGA complex, participates in a subcomplex required for deubiquitination of H2B and for the maintenance of steady-state H3 methylation levels. The TREX-2 complex functions in docking export-competent ribonucleoprotein particles (mRNPs) to the nuclear entrance of the nuclear pore complex (nuclear basket). TREX-2 participates in mRNA export and accurate chromatin positioning in the nucleus by tethering genes to the nuclear periphery. May also be involved in cytoplasmic mRNA decay by interaction with components of P-bodies. This is Transcription and mRNA export factor SUS1 from Candida glabrata (strain ATCC 2001 / BCRC 20586 / JCM 3761 / NBRC 0622 / NRRL Y-65 / CBS 138) (Yeast).